The following is a 320-amino-acid chain: Meso-diaminopimelate D-dehydrogenase (320 aa).

NADP(+) contacts are provided by residues 11–14 (YGNL), 35–37 (SRR), 65–68 (CMGS), 88–90 (TYD), and 117–121 (TGWDP). Substrate-binding positions include Asp-90, Asp-120, Trp-144, 150-151 (QG), Thr-169, Arg-195, His-244, and Asn-270.

In terms of assembly, homodimer.

The enzyme catalyses meso-2,6-diaminopimelate + NADP(+) + H2O = (S)-2-amino-6-oxoheptanedioate + NH4(+) + NADPH + H(+). It functions in the pathway amino-acid biosynthesis; L-lysine biosynthesis via DAP pathway; DL-2,6-diaminopimelate from (S)-tetrahydrodipicolinate: step 1/1. Its activity is regulated as follows. L,L-2,6-diaminopimelate and D,D-2,6-diaminopimelate competitively inhibit the oxidative deamination of meso-2,6-diaminopimelate. The enzyme is also inhibited by L-cysteine, and by p-chloromercuribenzoate, iodoacetic acid and HgCl(2) in vitro. Its function is as follows. Catalyzes the reversible NADPH-dependent reductive amination of L-2-amino-6-oxopimelate, the acyclic form of L-tetrahydrodipicolinate, to generate the meso compound, D,L-2,6-diaminopimelate. Probably plays a role in lysine biosynthesis. Exhibits a high substrate specificity for meso-2,6-diaminopimelate, since L,L-2,6-diaminopimelate, D,D-2,6-diaminopimelate, L-glutamate, L-alanine, L-leucine, L-valine, L-aspartate, L-threonine, L-homoserine, L-methionine, L-lysine, L-serine, L-phenylalanine, L-tyrosine, L-tryptophan, L-ornithine, L-histidine, L-arginine, D-glutamate, and D-alanine are not substrates for the oxidative deamination reaction. Can use NAD(+) only poorly since the activity observed in the presence of NAD(+) is about 3% of that with NADP(+). In Corynebacterium glutamicum (strain ATCC 13032 / DSM 20300 / JCM 1318 / BCRC 11384 / CCUG 27702 / LMG 3730 / NBRC 12168 / NCIMB 10025 / NRRL B-2784 / 534), this protein is Meso-diaminopimelate D-dehydrogenase (ddh).